Reading from the N-terminus, the 379-residue chain is Forkhead box protein F1 (379 aa).

The tract at residues 1-45 (MSSAPEKQQPPHGGGGGGGGGGGAAMDPASSGPSKAKKTNAGIRR) is disordered. A compositionally biased stretch (gly residues) spans 12 to 24 (HGGGGGGGGGGGA). Residues 47–138 (EKPPYSYIAL…EFMFEEGSFR (92 aa)) constitute a DNA-binding region (fork-head).

Expressed in lung and placenta.

It is found in the nucleus. Functionally, probable transcription activator for a number of lung-specific genes. The polypeptide is Forkhead box protein F1 (FOXF1) (Homo sapiens (Human)).